Reading from the N-terminus, the 182-residue chain is UPF0397 protein SAG1634 (182 aa).

A run of 5 helical transmembrane segments spans residues V9–P29, A42–I62, S74–A94, L109–P129, and F148–A168.

The protein belongs to the UPF0397 family.

Its subcellular location is the cell membrane. This is UPF0397 protein SAG1634 from Streptococcus agalactiae serotype V (strain ATCC BAA-611 / 2603 V/R).